The sequence spans 110 residues: ORC1-type DNA replication protein 3 (110 aa).

Residue 8–12 (SGKSL) coordinates ATP.

Belongs to the CDC6/cdc18 family.

Involved in regulation of DNA replication. The chain is ORC1-type DNA replication protein 3 (orc3) from Halobacterium salinarum (strain ATCC 700922 / JCM 11081 / NRC-1) (Halobacterium halobium).